The sequence spans 296 residues: UDP-N-acetylenolpyruvoylglucosamine reductase (296 aa).

The FAD-binding PCMH-type domain maps to 18–189 (LGGRALAEVR…TGADIVLRRG (172 aa)). Arginine 166 is an active-site residue. The active-site Proton donor is the cysteine 218. Glutamate 289 is an active-site residue.

This sequence belongs to the MurB family. It depends on FAD as a cofactor.

It is found in the cytoplasm. It catalyses the reaction UDP-N-acetyl-alpha-D-muramate + NADP(+) = UDP-N-acetyl-3-O-(1-carboxyvinyl)-alpha-D-glucosamine + NADPH + H(+). The protein operates within cell wall biogenesis; peptidoglycan biosynthesis. Functionally, cell wall formation. This Nitratidesulfovibrio vulgaris (strain ATCC 29579 / DSM 644 / CCUG 34227 / NCIMB 8303 / VKM B-1760 / Hildenborough) (Desulfovibrio vulgaris) protein is UDP-N-acetylenolpyruvoylglucosamine reductase.